The sequence spans 42 residues: Perlinhibin-related protein (42 aa).

In terms of processing, contains four disulfide bonds.

In terms of biological role, inhibitor of shell growth. In Haliotis laevigata (Smooth Australian abalone), this protein is Perlinhibin-related protein.